A 208-amino-acid chain; its full sequence is A-type ATP synthase subunit E (208 aa).

The tract at residues 37–57 (DAEKTAEAEKNKILDNGKKQS) is disordered.

The protein belongs to the V-ATPase E subunit family. In terms of assembly, has multiple subunits with at least A(3), B(3), C, D, E, F, H, I and proteolipid K(x).

The protein localises to the cell membrane. Its function is as follows. Component of the A-type ATP synthase that produces ATP from ADP in the presence of a proton gradient across the membrane. The protein is A-type ATP synthase subunit E of Methanobrevibacter smithii (strain ATCC 35061 / DSM 861 / OCM 144 / PS).